A 173-amino-acid chain; its full sequence is U1 small nuclear ribonucleoprotein C (173 aa).

The Matrin-type zinc finger occupies 4-36 (YYCDYCDTYLTHDSPSVRKTHCQGRKHKDNVKF). Positions 72 to 100 (AAIPPPANMQGPPRPVPPGPMGPGPNMLG) are disordered. Over residues 73-94 (AIPPPANMQGPPRPVPPGPMGP) the composition is skewed to pro residues.

The protein belongs to the U1 small nuclear ribonucleoprotein C family. U1 snRNP is composed of the 7 core Sm proteins B/B', D1, D2, D3, E, F and G that assemble in a heptameric protein ring on the Sm site of the small nuclear RNA to form the core snRNP, and at least 3 U1 snRNP-specific proteins U1-70K, U1-A and U1-C. U1-C interacts with U1 snRNA and the 5' splice-site region of the pre-mRNA.

It localises to the nucleus. Its function is as follows. Component of the spliceosomal U1 snRNP, which is essential for recognition of the pre-mRNA 5' splice-site and the subsequent assembly of the spliceosome. U1-C is directly involved in initial 5' splice-site recognition for both constitutive and regulated alternative splicing. The interaction with the 5' splice-site seems to precede base-pairing between the pre-mRNA and the U1 snRNA. Stimulates commitment or early (E) complex formation by stabilizing the base pairing of the 5' end of the U1 snRNA and the 5' splice-site region. In Pediculus humanus subsp. corporis (Body louse), this protein is U1 small nuclear ribonucleoprotein C.